Consider the following 172-residue polypeptide: Photosystem I assembly protein Ycf3 (172 aa).

3 TPR repeats span residues 35 to 68, 72 to 105, and 120 to 153; these read AFSY…EEDP, SYIL…NSQL, and GVKA…SPNN.

This sequence belongs to the Ycf3 family.

The protein localises to the plastid. It localises to the chloroplast thylakoid membrane. Its function is as follows. Essential for the assembly of the photosystem I (PSI) complex. May act as a chaperone-like factor to guide the assembly of the PSI subunits. This is Photosystem I assembly protein Ycf3 from Guillardia theta (Cryptophyte).